The chain runs to 115 residues: Autophagy-related protein 8i (115 aa).

Glycine 115 carries the Phosphatidylethanolamine amidated glycine lipid modification.

The protein belongs to the ATG8 family. In terms of assembly, interacts with ATG4. Interacts with NBR1. Post-translationally, gly-115 forms then a thioester bond with the 'Cys-558' of ATG7 (E1-like activating enzyme) before being transferred to the 'Cys-258' of ATG3 (the specific E2 conjugating enzyme), in order to be finally amidated with phosphatidylethanolamine. This lipid modification anchors ATG8 to autophagosomes. In terms of tissue distribution, constitutively expressed.

The protein localises to the cytoplasmic vesicle. It localises to the autophagosome membrane. The protein resides in the vacuole membrane. It is found in the cytoplasm. Its subcellular location is the cytoskeleton. In terms of biological role, ubiquitin-like modifier involved in autophagosomes formation. May mediate the delivery of the autophagosomes to the vacuole via the microtubule cytoskeleton. In Arabidopsis thaliana (Mouse-ear cress), this protein is Autophagy-related protein 8i (ATG8I).